The primary structure comprises 1409 residues: Receptor-type tyrosine-protein phosphatase (1409 aa).

The first 22 residues, 1 to 22, serve as a signal peptide directing secretion; sequence MRINRWIWWATVILLYLRTGLA. Topologically, residues 23-712 are extracellular; the sequence is ADFFRSSEEN…LLDTESSSSG (690 aa). Residues 32 to 53 are disordered; sequence NDRKSSDDLDNFNSTKIEPDKP. Positions 159–267 constitute an Ig-like C2-type domain; it reads PTKCDKRDLA…TASASDLDVT (109 aa). Residues C189 and C255 are joined by a disulfide bond. Fibronectin type-III domains follow at residues 276–366 and 372–502; these read APRQ…TKQK and KEED…AQPD. A helical transmembrane segment spans residues 713–733; sequence FGIFMKIILPFLLFLAFATGV. Residues 734–1409 are Cytoplasmic-facing; sequence TMFFVNRKGH…LADYISKTYR (676 aa). Tyrosine-protein phosphatase domains lie at 793-1072 and 1135-1403; these read FAQE…LAEW and LEEE…LADY. Catalysis depends on phosphocysteine intermediate residues C1013 and C1344.

The protein belongs to the protein-tyrosine phosphatase family. Receptor class 2A subfamily. Expressed in muscles, hypodermis and a subset of neurons. Expressed in the AVA neurons, with high expression in the anterior half of the preanal ganglion where AVA neurons contact the PHB neurons.

The protein localises to the cell membrane. The protein resides in the synapse. It catalyses the reaction O-phospho-L-tyrosyl-[protein] + H2O = L-tyrosyl-[protein] + phosphate. In terms of biological role, possesses an intrinsic protein tyrosine phosphatase (PTPase) activity. Regulates egl-15 activity which is required for hypodermis-mediated fluid homeostasis and protein degradation in muscle. During the formation of neuromuscular junctions at the larval stage, negatively regulates membrane protrusion from body wall muscles. Plays a role in nicotinic acetylcholine receptor (nAChR)-mediated sensitivity to nicotine. Regulates synaptic levels of nAchR subunit lev-1 in the nerve cord. Promotes the outgrowth of the quaternary dendritic branches of the PVD sensory neurons. In parallel to the sax-7/mnr-1 pathway, also controls the extension of the PVD primary branches. Acts in the netrin/DCC pathway to mediate the formation of synapses between the AVA interneurons and the PHB sensory neurons. Also required for the formation of synapses between the AVA interneurons and the VA10 motor neurons. This is Receptor-type tyrosine-protein phosphatase from Caenorhabditis elegans.